Here is a 955-residue protein sequence, read N- to C-terminus: RNA polymerase-associated protein RapA (955 aa).

In terms of domain architecture, Helicase ATP-binding spans 163–333; the sequence is EVGHRYAPRV…FARLRLLDPE (171 aa). 176-183 is a binding site for ATP; that stretch reads DEVGLGKT. Positions 279–282 match the DEAH box motif; the sequence is DEAH. One can recognise a Helicase C-terminal domain in the interval 478 to 642; sequence RVEWLLELLL…AVRDELFELL (165 aa).

It belongs to the SNF2/RAD54 helicase family. RapA subfamily. Interacts with the RNAP. Has a higher affinity for the core RNAP than for the holoenzyme. Its ATPase activity is stimulated by binding to RNAP.

In terms of biological role, transcription regulator that activates transcription by stimulating RNA polymerase (RNAP) recycling in case of stress conditions such as supercoiled DNA or high salt concentrations. Probably acts by releasing the RNAP, when it is trapped or immobilized on tightly supercoiled DNA. Does not activate transcription on linear DNA. Probably not involved in DNA repair. This Aeromonas hydrophila subsp. hydrophila (strain ATCC 7966 / DSM 30187 / BCRC 13018 / CCUG 14551 / JCM 1027 / KCTC 2358 / NCIMB 9240 / NCTC 8049) protein is RNA polymerase-associated protein RapA.